Here is a 239-residue protein sequence, read N- to C-terminus: Small ribosomal subunit protein uS2 (239 aa).

The protein belongs to the universal ribosomal protein uS2 family.

The protein is Small ribosomal subunit protein uS2 of Francisella tularensis subsp. novicida (strain U112).